The sequence spans 200 residues: MKWLGNVLVSPGEGGVYGERTLDGYRVWDPYRSKLAALYTLGGGVELTPEMRVLYLGAANGTTVSHVADYVETVYAVEFAPRPMQDLLEVARRRRNIVPIMADASRPEEYAPFMEAVDLVYQDVAQPNQVEIAERNLVFLKPGGHLVLMLKTRSVDVRRDPAEVLAGARTGLEERLDIADVRWLDPYHHDHAAIVCSRRE.

S-adenosyl-L-methionine-binding positions include 62 to 63, 78 to 79, 103 to 104, and 123 to 126; these read TT, EF, DA, and DVAQ.

Belongs to the methyltransferase superfamily. Fibrillarin family. Interacts with nop5. Component of box C/D small ribonucleoprotein (sRNP) particles that contain rpl7ae, FlpA and nop5, plus a guide RNA.

In terms of biological role, involved in pre-rRNA and tRNA processing. Utilizes the methyl donor S-adenosyl-L-methionine to catalyze the site-specific 2'-hydroxyl methylation of ribose moieties in rRNA and tRNA. Site specificity is provided by a guide RNA that base pairs with the substrate. Methylation occurs at a characteristic distance from the sequence involved in base pairing with the guide RNA. This Methanoculleus marisnigri (strain ATCC 35101 / DSM 1498 / JR1) protein is Fibrillarin-like rRNA/tRNA 2'-O-methyltransferase.